Consider the following 307-residue polypeptide: Tyrosine recombinase XerC (307 aa).

The Core-binding (CB) domain maps to glutamate 9–valine 95. The 181-residue stretch at histidine 116–aspartate 296 folds into the Tyr recombinase domain. Residues arginine 155, lysine 179, histidine 248, arginine 251, and histidine 274 contribute to the active site. Tyrosine 283 acts as the O-(3'-phospho-DNA)-tyrosine intermediate in catalysis.

It belongs to the 'phage' integrase family. XerC subfamily. In terms of assembly, forms a cyclic heterotetrameric complex composed of two molecules of XerC and two molecules of XerD, in which XerC interacts with XerD via its C-terminal region, XerD interacts with XerC via its C-terminal region and so on.

It localises to the cytoplasm. With respect to regulation, ftsK may regulate the catalytic switch between XerC and XerD in the heterotetrameric complex during the two steps of the recombination process. Its function is as follows. Site-specific tyrosine recombinase, which acts by catalyzing the cutting and rejoining of the recombining DNA molecules. Binds cooperatively to specific DNA consensus sequences that are separated from XerD binding sites by a short central region, forming the heterotetrameric XerC-XerD complex that recombines DNA substrates. The complex is essential to convert dimers of the bacterial chromosome into monomers to permit their segregation at cell division. It also contributes to the segregational stability of plasmids. In the complex XerC specifically exchanges the top DNA strands. This is Tyrosine recombinase XerC from Proteus mirabilis.